The chain runs to 116 residues: Classical arabinogalactan protein 25 (116 aa).

Residues 1–28 (MAFSFLNKLLIIFIFIFISLSSSSPTIS) form the signal peptide. Residues 40–95 (LLPSPGDALPSDDGSGTIPSSPSPPDPDTNDGSYPDPLAFSPFASPPVSSPSPPPS) are disordered. Composition is skewed to low complexity over residues 50-59 (SDDGSGTIPS) and 69-82 (NDGSYPDPLAFSPF). The span at 83-95 (ASPPVSSPSPPPS) shows a compositional bias: pro residues. Residue S89 is the site of GPI-anchor amidated serine attachment. The propeptide at 90-116 (PSPPPSLPSAGVLLISLIISSASFLAL) is removed in mature form.

Belongs to the classical AGP family. O-glycosylated on the hydroxyproline residues.

It localises to the cell membrane. In terms of biological role, proteoglycan that seems to be implicated in diverse developmental roles such as differentiation, cell-cell recognition, embryogenesis and programmed cell death. The sequence is that of Classical arabinogalactan protein 25 (AGP25) from Arabidopsis thaliana (Mouse-ear cress).